Reading from the N-terminus, the 327-residue chain is GTPase Obg (327 aa).

In terms of domain architecture, Obg spans 1 to 159 (MQFIDQANII…WEVQLELKLL (159 aa)). Residues 160–327 (AEVGIIGLPN…SLLSEVWNRI (168 aa)) form the OBG-type G domain. Residues 166-173 (GLPNAGKS), 191-195 (FTTLI), 213-216 (DIPG), 280-283 (NKKE), and 309-311 (SSA) each bind ATP. Positions 173 and 193 each coordinate Mg(2+).

It belongs to the TRAFAC class OBG-HflX-like GTPase superfamily. OBG GTPase family. In terms of assembly, monomer. It depends on Mg(2+) as a cofactor.

The protein localises to the cytoplasm. An essential GTPase which binds GTP, GDP and possibly (p)ppGpp with moderate affinity, with high nucleotide exchange rates and a fairly low GTP hydrolysis rate. Plays a role in control of the cell cycle, stress response, ribosome biogenesis and in those bacteria that undergo differentiation, in morphogenesis control. The polypeptide is GTPase Obg (Prochlorococcus marinus (strain MIT 9515)).